The chain runs to 503 residues: Long-chain-fatty-acid--CoA ligase FadD13 (503 aa).

It belongs to the ATP-dependent AMP-binding enzyme family. Homodimer.

The protein localises to the cell membrane. The catalysed reaction is a long-chain fatty acid + ATP + CoA = a long-chain fatty acyl-CoA + AMP + diphosphate. It functions in the pathway lipid metabolism; fatty acid biosynthesis. Required for maintaining the appropriate mycolic acid composition and permeability of the envelope on its exposure to acidic pH. Catalyzes the activation of long-chain fatty acids as acyl-coenzyme A (acyl-CoA), which are then transferred to the multifunctional polyketide synthase (PKS) type III for further chain extension. The sequence is that of Long-chain-fatty-acid--CoA ligase FadD13 (fadD13) from Mycobacterium tuberculosis (strain CDC 1551 / Oshkosh).